The sequence spans 708 residues: Protein psiF (708 aa).

Residues 1–19 (MKYLFIAIILILYCSFTKA) form the signal peptide. Topologically, residues 20-643 (DQKKFLVNMY…QSTAVKVGVG (624 aa)) are extracellular. N-linked (GlcNAc...) asparagine glycosylation is found at N78, N116, N222, N317, N318, N371, N498, and N600. Positions 103 to 263 (TQTAGSQNYY…YDYCGICNGK (161 aa)) constitute a PA14 domain. The helical transmembrane segment at 644–664 (IGAAAAAGIAIGGAVAAGLAI) threads the bilayer. Over 665 to 708 (FGGKKAYDTWKTSRGNVMTGSQSNPLYTQNQNNGNNPLYSAPAE) the chain is Cytoplasmic. Residues 682 to 702 (MTGSQSNPLYTQNQNNGNNPL) are compositionally biased toward polar residues. Residues 682-708 (MTGSQSNPLYTQNQNNGNNPLYSAPAE) are disordered.

Belongs to the prespore-cell-inducing factor family. As to quaternary structure, forms a complex with dicB.

The protein resides in the membrane. It localises to the secreted. Its function is as follows. Acts as a quorum sensing protein regulating discoidin gene expression during growth and development. D.discoideum is a single-celled amoebae and switches to multicellular development when food becomes limited. As the growing cells reach a high density, they begin expressing discoidin genes. The ability of psiF/dicA to induce discoidin gene expression when present in conditioned medium, suggests that it allows cells to sense their local density. The polypeptide is Protein psiF (psiF) (Dictyostelium discoideum (Social amoeba)).